The following is a 211-amino-acid chain: tRNA (pseudouridine(54)-N(1))-methyltransferase (211 aa).

Leucine 128, glycine 150, and cysteine 183 together coordinate S-adenosyl-L-methionine.

The protein belongs to the methyltransferase superfamily. TrmY family. As to quaternary structure, homodimer.

The protein resides in the cytoplasm. The catalysed reaction is pseudouridine(54) in tRNA + S-adenosyl-L-methionine = N(1)-methylpseudouridine(54) in tRNA + S-adenosyl-L-homocysteine + H(+). Functionally, specifically catalyzes the N1-methylation of pseudouridine at position 54 (Psi54) in tRNAs. This is tRNA (pseudouridine(54)-N(1))-methyltransferase from Methanosarcina mazei (strain ATCC BAA-159 / DSM 3647 / Goe1 / Go1 / JCM 11833 / OCM 88) (Methanosarcina frisia).